Here is a 145-residue protein sequence, read N- to C-terminus: Lipoprotein signal peptidase (145 aa).

A run of 2 helical transmembrane segments spans residues 57–77 (LFFI…MIKL) and 79–99 (ENSL…GNLI). Active-site residues include aspartate 109 and aspartate 124. The helical transmembrane segment at 120–140 (FNVADSFIVVGAIILGYLMIF) threads the bilayer.

It belongs to the peptidase A8 family.

It localises to the cell membrane. The enzyme catalyses Release of signal peptides from bacterial membrane prolipoproteins. Hydrolyzes -Xaa-Yaa-Zaa-|-(S,diacylglyceryl)Cys-, in which Xaa is hydrophobic (preferably Leu), and Yaa (Ala or Ser) and Zaa (Gly or Ala) have small, neutral side chains.. It participates in protein modification; lipoprotein biosynthesis (signal peptide cleavage). Its function is as follows. This protein specifically catalyzes the removal of signal peptides from prolipoproteins. The protein is Lipoprotein signal peptidase of Caldanaerobacter subterraneus subsp. tengcongensis (strain DSM 15242 / JCM 11007 / NBRC 100824 / MB4) (Thermoanaerobacter tengcongensis).